We begin with the raw amino-acid sequence, 494 residues long: MGSTSSLYAAIDLGSNSFHMLVVREVAGSIQTLTRIKRKVRLAAGLNSENALSNEAMERGWQCLRLFAERLQDIPPSQIRVVATATLRLAVNAGDFIAKAQEILGCPVQVISGEEEARLIYQGVAHTTGGADQRLVVDIGGASTELVTGTGAQTTSLFSLSMGCVTWLERYFADRNLGQENFDAAEKAAREVLRPVADELRYHGWKVCVGASGTVQALQEIMMAQGMDERITLEKLQQLKQRAIHCGRLEELEIDGLTLERALVFPSGLAILIAIFTELNIQCMTLAGGALREGLVYGMLHLAVEQDIRSRTLRNIQRRFMIDIDQAQRVAKVAANFFDQVENEWHLEAISRDLLISACQLHEIGLSVDFKQAPQHAAYLVRNLDLPGFTPAQKKLLATLLLNQTNPIDLSSLHQQNAVPPRVAEQLCRLLRLAIIFASRRRDDLVPEMTLKANHELLTLTLPQGWLTQHPLGKEIIDQESQWQSYVHWPLEVH.

Belongs to the GppA/Ppx family. GppA subfamily.

The catalysed reaction is guanosine 3'-diphosphate 5'-triphosphate + H2O = guanosine 3',5'-bis(diphosphate) + phosphate + H(+). Its pathway is purine metabolism; ppGpp biosynthesis; ppGpp from GTP: step 2/2. In terms of biological role, catalyzes the conversion of pppGpp to ppGpp. Guanosine pentaphosphate (pppGpp) is a cytoplasmic signaling molecule which together with ppGpp controls the 'stringent response', an adaptive process that allows bacteria to respond to amino acid starvation, resulting in the coordinated regulation of numerous cellular activities. The polypeptide is Guanosine-5'-triphosphate,3'-diphosphate pyrophosphatase (Escherichia fergusonii (strain ATCC 35469 / DSM 13698 / CCUG 18766 / IAM 14443 / JCM 21226 / LMG 7866 / NBRC 102419 / NCTC 12128 / CDC 0568-73)).